The sequence spans 200 residues: BREX protein BrxA (200 aa).

Belongs to the BrxA family.

Functionally, BREX systems (bacteriophage exclusion) provide immunity against bacteriophage. Part of a type 1 BREX system. This system allows phage adsorption but prevents phage DNA replication, without degradation of the phage DNA. Methylation of bacterial DNA by PglX probably guides self/non-self discrimination. When the brxA-brxB-brxC-pglX and pglZ-brxL operons are transformed into a susceptible B.subtilis strain (BEST7003) they confer resistance to bacteriophages SPbeta, SP16, Zeta, phi3T and SP02 and partial protection to phages SP01 and SP82G (these include lytic and temperate phage). They do not protect against phages phi105, rho10 or rho14. Additionally confers a very slight reduction in efficiency of plasmid transformation. In Bacillus cereus (strain H3081.97), this protein is BREX protein BrxA.